The sequence spans 270 residues: UPF0354 protein BCAH187_A4826 (270 aa).

It belongs to the UPF0354 family.

This chain is UPF0354 protein BCAH187_A4826, found in Bacillus cereus (strain AH187).